A 346-amino-acid polypeptide reads, in one-letter code: Putative isoaspartyl peptidase/L-asparaginase (346 aa).

Threonine 207 acts as the Nucleophile in catalysis. Residues 235-238 (RVGD) and 257-260 (TGTG) each bind substrate.

Belongs to the Ntn-hydrolases family. As to quaternary structure, heterodimer of an alpha and beta chain produced by autocleavage. In terms of processing, cleaved into an alpha and beta chain by autocatalysis; this activates the enzyme. The N-terminal residue of the beta subunit is responsible for the nucleophile hydrolase activity.

It catalyses the reaction Cleavage of a beta-linked Asp residue from the N-terminus of a polypeptide.. The enzyme catalyses L-asparagine + H2O = L-aspartate + NH4(+). In terms of biological role, has both L-asparaginase and beta-aspartyl peptidase activity. Does not have aspartylglucosaminidase activity and is inactive toward GlcNAc-L-Asn. Likewise, has no activity toward glutamine. This chain is Putative isoaspartyl peptidase/L-asparaginase, found in Dictyostelium discoideum (Social amoeba).